The following is a 203-amino-acid chain: Phosphatidylglycerophosphatase B (203 aa).

Residue Met-1 is a topological domain, cytoplasmic. A helical membrane pass occupies residues 2–17 (YKPVSLFLFFLILAAA). At 18 to 55 (IHTNAVQSADEAISKAAVLIRQPWLNEVMTGITHLGAS) the chain is on the extracellular side. The chain crosses the membrane as a helical span at residues 56-74 (SFLLPLIVIIGAGMFFYRK). The Cytoplasmic portion of the chain corresponds to 75-78 (TWDG). The chain crosses the membrane as a helical span at residues 79 to 99 (LLMLLVFGTDRLLNKVLKEWI). The interval 96–104 (KEWIERVRP) is phosphatase sequence motif I. Residues 100-119 (ERVRPDFAPLVHESSFSFPS) are Extracellular-facing. Residues 118-121 (PSGH) form a phosphatase sequence motif II region. Residues 120–139 (GHSMNAACVYPVIAYFLVKH) form a helical membrane-spanning segment. His-121 functions as the Proton donors in the catalytic mechanism. Residues 140 to 146 (LPFLSKH) lie on the Cytoplasmic side of the membrane. The helical transmembrane segment at 147–167 (KKMVYIIAGVIAVLVGISRVY) threads the bilayer. Residues 164–175 (SRVYLGVHFVTD) are phosphatase sequence motif III. At 168-172 (LGVHF) the chain is on the extracellular side. Catalysis depends on His-171, which acts as the Nucleophile. A helical transmembrane segment spans residues 173-196 (VTDVLGGFSLGLLLFFLVKGFDEK). Residues 197-203 (IKRFRQK) lie on the Cytoplasmic side of the membrane.

This sequence belongs to the PA-phosphatase related phosphoesterase family.

The protein resides in the cell membrane. It catalyses the reaction a 1,2-diacyl-sn-glycero-3-phospho-(1'-sn-glycero-3'-phosphate) + H2O = a 1,2-diacyl-sn-glycero-3-phospho-(1'-sn-glycerol) + phosphate. Its function is as follows. Catalyzes the dephosphorylation of phosphatidylglycerophosphate (PGP) to phosphatidylglycerol. Also has undecaprenyl pyrophosphate phosphatase activity, required for the biosynthesis of the lipid carrier undecaprenyl phosphate. The chain is Phosphatidylglycerophosphatase B from Bacillus subtilis (strain 168).